The following is a 49-amino-acid chain: Large ribosomal subunit protein bL33 (49 aa).

It belongs to the bacterial ribosomal protein bL33 family.

This Moorella thermoacetica (strain ATCC 39073 / JCM 9320) protein is Large ribosomal subunit protein bL33.